The chain runs to 712 residues: Lactoperoxidase (712 aa).

Positions 1–26 (MRVLLHLPALLASLILLQAAASTTRA) are cleaved as a signal peptide. The propeptide occupies 27-80 (QTTRTSAISDTVSQAKVQVNKAFLDSRTRLKTAMSSETPTSRQLSEYLKHAKGR). Asparagine 106 is a glycosylation site (N-linked (GlcNAc...) asparagine). Cysteine 132 and cysteine 145 are joined by a disulfide. Residue asparagine 212 is glycosylated (N-linked (GlcNAc...) asparagine). Aspartate 225 is a binding site for heme b. The active-site Proton acceptor is the histidine 226. Aspartate 227 contacts Ca(2+). Disulfide bonds link cysteine 246–cysteine 256 and cysteine 250–cysteine 274. Threonine 301, phenylalanine 303, aspartate 305, and serine 307 together coordinate Ca(2+). Residue serine 315 is modified to Phosphoserine. N-linked (GlcNAc...) asparagine glycans are attached at residues asparagine 322 and asparagine 358. Residues cysteine 354 and cysteine 365 are joined by a disulfide bond. Residues glutamate 375 and histidine 468 each contribute to the heme b site. Position 482 is a 3'-nitrotyrosine (tyrosine 482). Disulfide bonds link cysteine 573–cysteine 630 and cysteine 671–cysteine 696.

Belongs to the peroxidase family. XPO subfamily. Ca(2+) is required as a cofactor. The cofactor is heme b. As to expression, mammary gland, milk and salivary gland. Found in bronchial submucosal glands.

The protein localises to the secreted. The protein resides in the cytoplasm. It carries out the reaction 2 a phenolic donor + H2O2 = 2 a phenolic radical donor + 2 H2O. The enzyme catalyses thiocyanate + H2O2 + H(+) = hypothiocyanous acid + H2O. It catalyses the reaction iodide + H2O2 = hypoiodite + H2O. Its function is as follows. Heme-containing oxidoreductase which catalyzes the conversion of thiocyanate (SCN(-)) into antimicrobial agent hypothiocyanous acid (OSCN(-)) in the presence of hydrogen peroxide (H2O2). Also involved in the conversion of iodide (I(-)) into hypoiodite (IO(-)) in the presence of H2O2. Responsible for the inactivation of a wide range of micro-organisms and hence, important component of defense mechanism. Shows antibacterial properties against Pseudomonas aeruginosa. The lactoperoxidase-SCN(-)-H2O2 system shows antibacterial properties against Burkholderia cepacia and Haemophilus influenzae in vitro. Present in mammary and salivary gland secretions and may contribute to airway host defense against infection. May contribute to maintaining an appropriate H2O2 cellular level, therefore protecting cells from H2O2-caused injuries and inflammation. This Homo sapiens (Human) protein is Lactoperoxidase.